A 343-amino-acid polypeptide reads, in one-letter code: ATP phosphoribosyltransferase regulatory subunit (343 aa).

Residues 324 to 343 (RANGRAKRPARPRRSPPRPR) form a disordered region. The segment covering 327 to 343 (GRAKRPARPRRSPPRPR) has biased composition (basic residues).

It belongs to the class-II aminoacyl-tRNA synthetase family. HisZ subfamily. In terms of assembly, heteromultimer composed of HisG and HisZ subunits.

The protein localises to the cytoplasm. Its pathway is amino-acid biosynthesis; L-histidine biosynthesis; L-histidine from 5-phospho-alpha-D-ribose 1-diphosphate: step 1/9. Required for the first step of histidine biosynthesis. May allow the feedback regulation of ATP phosphoribosyltransferase activity by histidine. The protein is ATP phosphoribosyltransferase regulatory subunit of Anaeromyxobacter sp. (strain Fw109-5).